A 492-amino-acid polypeptide reads, in one-letter code: Catalase-1 (492 aa).

Active-site residues include His-65 and Asn-138. A heme-binding site is contributed by Tyr-348.

The protein belongs to the catalase family. Homotetramer and heterotetramer. At least six or seven isozymes are produced from a mixture of 3 gene products. Interacts with NCA1. Interacts with LSD1. The cofactor is heme.

The protein resides in the cytoplasm. The enzyme catalyses 2 H2O2 = O2 + 2 H2O. In terms of biological role, occurs in almost all aerobically respiring organisms and serves to protect cells from the toxic effects of hydrogen peroxide. This is Catalase-1 (CAT1) from Arabidopsis thaliana (Mouse-ear cress).